The sequence spans 387 residues: S-adenosylmethionine synthase (387 aa).

Histidine 17 contacts ATP. Aspartate 19 contacts Mg(2+). Residue glutamate 45 participates in K(+) binding. L-methionine contacts are provided by glutamate 58 and glutamine 101. A flexible loop region spans residues 101 to 111; that stretch reads QSADIAMGVDA. ATP is bound by residues 166–168, 231–232, aspartate 240, 246–247, alanine 263, and lysine 267; these read DAK, RF, and RK. Aspartate 240 lines the L-methionine pocket. Lysine 271 serves as a coordination point for L-methionine.

This sequence belongs to the AdoMet synthase family. Homotetramer; dimer of dimers. Mg(2+) serves as cofactor. It depends on K(+) as a cofactor.

The protein localises to the cytoplasm. It catalyses the reaction L-methionine + ATP + H2O = S-adenosyl-L-methionine + phosphate + diphosphate. It functions in the pathway amino-acid biosynthesis; S-adenosyl-L-methionine biosynthesis; S-adenosyl-L-methionine from L-methionine: step 1/1. Its function is as follows. Catalyzes the formation of S-adenosylmethionine (AdoMet) from methionine and ATP. The overall synthetic reaction is composed of two sequential steps, AdoMet formation and the subsequent tripolyphosphate hydrolysis which occurs prior to release of AdoMet from the enzyme. The protein is S-adenosylmethionine synthase of Rhodospirillum centenum (strain ATCC 51521 / SW).